A 102-amino-acid polypeptide reads, in one-letter code: Apolipoprotein A-II (102 aa).

An N-terminal signal peptide occupies residues 1–18; the sequence is MKLLAMVALLVTICSLEG. M49 bears the Methionine sulfoxide mark.

It belongs to the apolipoprotein A2 family. Monomer. Interacts with NAXE and NDRG1. In terms of tissue distribution, plasma.

It localises to the secreted. In terms of biological role, may stabilize HDL (high density lipoprotein) structure by its association with lipids, and affect the HDL metabolism. This Rattus norvegicus (Rat) protein is Apolipoprotein A-II (Apoa2).